The sequence spans 368 residues: PPE family immunomodulator PPE68 (368 aa).

2 disordered regions span residues 255–280 and 312–368; these read LGTS…LLRA and AAAG…EDDW. The segment covering 312–327 has biased composition (low complexity); the sequence is AAAGSSATGGAAPVGA. The span at 354-368 shows a compositional bias: acidic residues; that stretch reads REEDDEDDWDEEDDW.

Belongs to the mycobacterial PPE family. Homodimer. Interacts with PE35. PE35/PPE68 complex interacts with human TLR2.

Its subcellular location is the secreted. It is found in the cell wall. It localises to the cell membrane. The protein localises to the cell surface. Functionally, plays a major role in RD1-associated pathogenesis, and may contribute to the establishment and maintenance of M.tuberculosis infection. Together with PE35, stimulates the secretion of IL-10 and MCP-1 from human macrophages, via the interaction with human Toll-like receptor 2 (TLR2). This Mycobacterium tuberculosis (strain CDC 1551 / Oshkosh) protein is PPE family immunomodulator PPE68 (PPE68).